The chain runs to 323 residues: Mortality factor 4-like protein 1 (323 aa).

The region spanning 12-62 (QEGERVLCFHGPLLYEAKCVKVAIKDKQVKYFIHHSGWNKNWDEWVPESRV) is the Tudor-knot domain. Residues 76-143 (LQKANQEQYA…RKKRARVDPT (68 aa)) are disordered. The tract at residues 94-227 (PGKKTSGLQQ…VAGIKEYFNV (134 aa)) is sufficient for interaction with SIN3A. Residues 96–107 (KKTSGLQQKNVD) carry the Nuclear localization signal motif. K104 is modified (N6-acetyllysine). An interaction with RB1-1 region spans residues 125–191 (STSETPQPPR…FYLPAKKNVD (67 aa)). Residues 149-303 (TFMNRVEVKV…FLKYLAKNSA (155 aa)) are sufficient for interaction with PHF12. The region spanning 152–323 (NRVEVKVKIP…APPEYHRKAV (172 aa)) is the MRG domain. Residues 284 to 305 (LALLLNYLHDFLKYLAKNSATL) are interaction with RB1-2.

In terms of assembly, component of the NuA4 histone acetyltransferase complex which contains the catalytic subunit KAT5/TIP60 and the subunits EP400, TRRAP/PAF400, BRD8/SMAP, EPC1, DMAP1/DNMAP1, RUVBL1/TIP49, RUVBL2, ING3, actin, ACTL6A/BAF53A, MORF4L1/MRG15, MORF4L2/MRGX, MRGBP, YEATS4/GAS41, VPS72/YL1 and MEAF6. The NuA4 complex interacts with MYC and the adenovirus E1A protein. MORF4L1 may also participate in the formation of NuA4 related complexes which lack the KAT5/TIP60 catalytic subunit, but which include the SWI/SNF related protein SRCAP. Component of the mSin3A histone deacetylase complex, which includes SIN3A, HDAC2, ARID4B, MORF4L1, RBBP4/RbAp48, and RBBP7/RbAp46. May also interact with PHF12 and one or more as yet undefined members of the TLE (transducin-like enhancer of split) family of transcriptional repressors. Component of the SIN3B complex, which includes SIN3B, HDAC2 or HDAC1, PHF12 and MORF4L1. Interacts with RB1 and KAT8. Interacts with the N-terminus of MRFAP1. Found in a complex composed of MORF4L1, MRFAP1 and RB1. Interacts with the entire BRCA complex, which contains BRCA1, PALB2, BRCA2 and RAD51. Interacts with PALB2. Forms a complex with MSL1 and NUPR1.

The protein resides in the nucleus. Component of the NuA4 histone acetyltransferase (HAT) complex which is involved in transcriptional activation of select genes principally by acetylation of nucleosomal histones H4 and H2A. This modification may both alter nucleosome - DNA interactions and promote interaction of the modified histones with other proteins which positively regulate transcription. This complex may be required for the activation of transcriptional programs associated with oncogene and proto-oncogene mediated growth induction, tumor suppressor mediated growth arrest and replicative senescence, apoptosis, and DNA repair. The NuA4 complex ATPase and helicase activities seem to be, at least in part, contributed by the association of RUVBL1 and RUVBL2 with EP400. NuA4 may also play a direct role in DNA repair when directly recruited to sites of DNA damage. As part of the SIN3B complex represses transcription and counteracts the histone acetyltransferase activity of EP300 through the recognition H3K27ac marks by PHF12 and the activity of the histone deacetylase HDAC2. SIN3B complex is recruited downstream of the constitutively active genes transcriptional start sites through interaction with histones and mitigates histone acetylation and RNA polymerase II progression within transcribed regions contributing to the regulation of transcription. Required for homologous recombination repair (HRR) and resistance to mitomycin C (MMC). Involved in the localization of PALB2, BRCA2 and RAD51, but not BRCA1, to DNA-damage foci. In Pongo abelii (Sumatran orangutan), this protein is Mortality factor 4-like protein 1 (MORF4L1).